Reading from the N-terminus, the 633-residue chain is Extracellular metalloproteinase 3 (633 aa).

A signal peptide spans 1–18 (MHGLLLAGLLALPMNVLA). Positions 19–246 (HPAEQHASNV…VHNVVDYVAS (228 aa)) are excised as a propeptide. Asparagine 410 carries N-linked (GlcNAc...) asparagine glycosylation. Histidine 429 provides a ligand contact to Zn(2+). Glutamate 430 is an active-site residue. Histidine 433 serves as a coordination point for Zn(2+). Residues asparagine 480 and asparagine 622 are each glycosylated (N-linked (GlcNAc...) asparagine).

It belongs to the peptidase M36 family. Zn(2+) is required as a cofactor.

Its subcellular location is the secreted. Its function is as follows. Secreted metalloproteinase probably acting as a virulence factor. The protein is Extracellular metalloproteinase 3 (MEP3) of Trichophyton equinum (Horse ringworm fungus).